A 108-amino-acid chain; its full sequence is Heme oxygenase (staphylobilin-producing) (108 aa).

One can recognise an ABM domain in the interval 2–93 (FMAENRLQLQ…DDDGQQSPIL (92 aa)). Asn-6 is a binding site for Fe cation. Heme is bound by residues 21–28 (RFYNRQGI) and His-76.

This sequence belongs to the antibiotic biosynthesis monooxygenase family. Heme-degrading monooxygenase IsdG subfamily. Homodimer.

Its subcellular location is the cytoplasm. It carries out the reaction heme b + 5 AH2 + 4 O2 + 2 H(+) = delta-staphylobilin + Fe(2+) + formaldehyde + 5 A + 4 H2O. The enzyme catalyses heme b + 5 AH2 + 4 O2 + 2 H(+) = beta-staphylobilin + Fe(2+) + formaldehyde + 5 A + 4 H2O. In terms of biological role, allows bacterial pathogens to use the host heme as an iron source. Catalyzes the oxidative degradation of the heme macrocyclic porphyrin ring to the oxo-bilirubin chromophore staphylobilin (a mixture of the linear tetrapyrroles 5-oxo-delta-bilirubin and 15-oxo-beta-bilirubin) in the presence of a suitable electron donor such as ascorbate or NADPH--cytochrome P450 reductase, with subsequent release of free iron. The polypeptide is Heme oxygenase (staphylobilin-producing) (isdI) (Staphylococcus aureus (strain Mu3 / ATCC 700698)).